A 443-amino-acid chain; its full sequence is MEQQLKTDGLNLSIRDAVKEDRISELPEDLLLQILSDIPTENVIATSVLSKRWRSLWKMVPNLTFDFTFDPKYHQTFSENLYRSLTSHEASVLESLQLNFTRGIDGLNIGMWIATAYVRHVRKLVLVSFGDVRDKRARFRSALFNFNDTLDILEIQDYILLDLPSPVCLKSLRELRLYEVHFKDEASVCNLLCGCPSLEVLSVHRERNVDVETFTIVVPSLQRLTIYDFCIGGGKGGYVINAPSLKYLNIVGFEGLDFCLIENAPELVEAEISDVSHIANENILESLTSVKRLSLESPIKIKFPTGKVFDQLVYLDVLTKEREWWNLLSRMLESSPKLQILKLTGLSCIEKGLDGQNWNPPKCVPECLLFHLEKFLWTGYEWQRGDEKEVATYILENARLLKKATFSTKRIDLENLEKRREMLNELASVARASDSCHLVFHSI.

One can recognise an F-box domain in the interval 20–68 (EDRISELPEDLLLQILSDIPTENVIATSVLSKRWRSLWKMVPNLTFDFT). 6 LRR repeats span residues 74–100 (HQTF…QLNF), 152–179 (ILEI…RLYE), 180–205 (VHFK…SVHR), 218–252 (VPSL…NIVG), 272–297 (ISDV…SLES), and 320–345 (KERE…KLTG). The 52-residue stretch at 357–408 (NWNPPKCVPECLLFHLEKFLWTGYEWQRGDEKEVATYILENARLLKKATFST) folds into the FBD domain.

This is Putative F-box/FBD/LRR-repeat protein At3g49030 from Arabidopsis thaliana (Mouse-ear cress).